The following is a 444-amino-acid chain: Phosphoglucosamine mutase (444 aa).

The active-site Phosphoserine intermediate is Ser-102. Mg(2+) contacts are provided by Ser-102, Asp-241, Asp-243, and Asp-245. Ser-102 is modified (phosphoserine).

It belongs to the phosphohexose mutase family. The cofactor is Mg(2+). In terms of processing, activated by phosphorylation.

The catalysed reaction is alpha-D-glucosamine 1-phosphate = D-glucosamine 6-phosphate. Its function is as follows. Catalyzes the conversion of glucosamine-6-phosphate to glucosamine-1-phosphate. The chain is Phosphoglucosamine mutase from Erwinia tasmaniensis (strain DSM 17950 / CFBP 7177 / CIP 109463 / NCPPB 4357 / Et1/99).